Here is a 343-residue protein sequence, read N- to C-terminus: tRNA N6-adenosine threonylcarbamoyltransferase (343 aa).

Fe cation-binding residues include His120 and His124. Residues 142–146 (VVSGG), Asp175, Gly188, Asp192, and Asn281 contribute to the substrate site. Asp310 contacts Fe cation.

It belongs to the KAE1 / TsaD family. Fe(2+) is required as a cofactor.

It is found in the cytoplasm. The enzyme catalyses L-threonylcarbamoyladenylate + adenosine(37) in tRNA = N(6)-L-threonylcarbamoyladenosine(37) in tRNA + AMP + H(+). Its function is as follows. Required for the formation of a threonylcarbamoyl group on adenosine at position 37 (t(6)A37) in tRNAs that read codons beginning with adenine. Is involved in the transfer of the threonylcarbamoyl moiety of threonylcarbamoyl-AMP (TC-AMP) to the N6 group of A37, together with TsaE and TsaB. TsaD likely plays a direct catalytic role in this reaction. The chain is tRNA N6-adenosine threonylcarbamoyltransferase from Bacillus cereus (strain ATCC 14579 / DSM 31 / CCUG 7414 / JCM 2152 / NBRC 15305 / NCIMB 9373 / NCTC 2599 / NRRL B-3711).